Here is a 235-residue protein sequence, read N- to C-terminus: Purine nucleoside phosphorylase DeoD-type (235 aa).

H4 contributes to the a purine D-ribonucleoside binding site. Phosphate is bound by residues G20, R24, R43, and 87-90 (RVGT). A purine D-ribonucleoside-binding positions include 179–181 (EME) and 203–204 (SD). The Proton donor role is filled by D204.

It belongs to the PNP/UDP phosphorylase family. As to quaternary structure, homohexamer; trimer of homodimers.

The catalysed reaction is a purine D-ribonucleoside + phosphate = a purine nucleobase + alpha-D-ribose 1-phosphate. It carries out the reaction a purine 2'-deoxy-D-ribonucleoside + phosphate = a purine nucleobase + 2-deoxy-alpha-D-ribose 1-phosphate. In terms of biological role, catalyzes the reversible phosphorolytic breakdown of the N-glycosidic bond in the beta-(deoxy)ribonucleoside molecules, with the formation of the corresponding free purine bases and pentose-1-phosphate. This is Purine nucleoside phosphorylase DeoD-type from Exiguobacterium sibiricum (strain DSM 17290 / CCUG 55495 / CIP 109462 / JCM 13490 / 255-15).